Consider the following 322-residue polypeptide: MSPNFKLQCHFTLILLTALRGESRYLEVQEAAVYDPFLLFSANLKRNLAEEQPYRRALRCLDMLSLPGQFTFTADQPQLHCAAFFIGEPEEFITIHFDLVSIDCQGGDFLKVFDGWILKGEKFPSSQDHPLPTRERYTDFCESGLTRRSVTSSQNVAMVFFRVHEPGNGFTITIKTDPNLFPCNIISQTPSGRFALVVPYQHQNCSFSIIYPVTIKISDLALGHLHGLQLKKPAAGCGGTGDFVELLGGTGLDTSKMMLLVDLCYPFHGPAQMKISCDNAVVRMVSSGKHMNRVTFEYRQLEPLELETSTRNSIPEYCLSSL.

Residues 1-24 (MSPNFKLQCHFTLILLTALRGESR) form the signal peptide. Intrachain disulfides connect cysteine 60/cysteine 81, cysteine 104/cysteine 141, cysteine 183/cysteine 205, cysteine 237/cysteine 264, and cysteine 277/cysteine 318. Asparagine 204 carries an N-linked (GlcNAc...) asparagine glycan.

This sequence belongs to the CRF-binding protein family.

The protein resides in the secreted. Its function is as follows. Binds CRF and inactivates it. May prevent inappropriate pituitary-adrenal stimulation in pregnancy. This Rattus norvegicus (Rat) protein is Corticotropin-releasing factor-binding protein (Crhbp).